Here is a 254-residue protein sequence, read N- to C-terminus: Isoprenyl transferase (254 aa).

D34 is a catalytic residue. D34 contacts Mg(2+). Substrate-binding positions include 35–38 (GNGR), W39, R47, H51, and 79–81 (STE). N82 serves as the catalytic Proton acceptor. Substrate contacts are provided by residues W83, R85, R202, and 208 to 210 (RIS). Residue E221 participates in Mg(2+) binding.

Belongs to the UPP synthase family. In terms of assembly, homodimer. The cofactor is Mg(2+).

Functionally, catalyzes the condensation of isopentenyl diphosphate (IPP) with allylic pyrophosphates generating different type of terpenoids. The chain is Isoprenyl transferase from Staphylococcus saprophyticus subsp. saprophyticus (strain ATCC 15305 / DSM 20229 / NCIMB 8711 / NCTC 7292 / S-41).